The primary structure comprises 514 residues: Ferrochelatase-2, chloroplastic (514 aa).

This sequence belongs to the ferrochelatase family.

It localises to the plastid. It is found in the chloroplast. The catalysed reaction is heme b + 2 H(+) = protoporphyrin IX + Fe(2+). The protein operates within porphyrin-containing compound metabolism; protoheme biosynthesis; protoheme from protoporphyrin-IX: step 1/1. Functionally, catalyzes the ferrous insertion into protoporphyrin IX. The sequence is that of Ferrochelatase-2, chloroplastic (HEMH) from Cucumis sativus (Cucumber).